The sequence spans 469 residues: Coiled-coil domain-containing protein 6 (469 aa).

Residues 1–10 are compositionally biased toward acidic residues; sequence MADSASESDT. Positions 1–37 are disordered; it reads MADSASESDTDAAGGGPAAMQSSCSATSGGSGGGGGG. Ala2 is subject to N-acetylalanine. A Phosphoserine modification is found at Ser45. A coiled-coil region spans residues 47–320; the sequence is FRLEELTNRL…LCRQLSESES (274 aa). 3 consecutive repeat copies span residues 99 to 127, 128 to 156, and 157 to 185. The interval 99–228 is 5 X 29 AA tandem repeats; that stretch reads EQEEEFISNT…AEKRILQEKL (130 aa). A 4; approximate repeat occupies 186 to 199; that stretch reads EQLRREKIDLENTL. The stretch at 200–228 is repeat 5; it reads EQEQEALVNRLWKRMDKLEAEKRILQEKL. A phosphoserine mark is found at Ser233, Ser237, Ser242, Ser247, Ser277, and Ser316. Positions 335–362 are disordered; that stretch reads AQGLRPRTVSSPIPYTPSPSSSRPISPG. Thr342 is subject to Phosphothreonine. The span at 344-361 shows a compositional bias: low complexity; the sequence is SSPIPYTPSPSSSRPISP. A phosphoserine mark is found at Ser356 and Ser360. At Arg380 the chain carries Omega-N-methylarginine. Phosphoserine occurs at positions 388 and 406. Residues 394–469 form a disordered region; the sequence is QHMGASHGIT…QHPVHPSSQP (76 aa). Over residues 419–444 the composition is skewed to pro residues; it reads PTPPPSPNTQSPVQPPPPPPPPPMQP. The SH3-binding signature appears at 435–444; that stretch reads PPPPPPPMQP. A compositionally biased stretch (low complexity) spans 460-469; the sequence is QHPVHPSSQP.

The protein resides in the cytoplasm. It is found in the cytoskeleton. This is Coiled-coil domain-containing protein 6 (Ccdc6) from Mus musculus (Mouse).